The following is a 127-amino-acid chain: Large ribosomal subunit protein bL12 (127 aa).

It belongs to the bacterial ribosomal protein bL12 family. As to quaternary structure, homodimer. Part of the ribosomal stalk of the 50S ribosomal subunit. Forms a multimeric L10(L12)X complex, where L10 forms an elongated spine to which 2 to 4 L12 dimers bind in a sequential fashion. Binds GTP-bound translation factors.

Functionally, forms part of the ribosomal stalk which helps the ribosome interact with GTP-bound translation factors. Is thus essential for accurate translation. This chain is Large ribosomal subunit protein bL12, found in Acidiphilium cryptum (strain JF-5).